We begin with the raw amino-acid sequence, 267 residues long: NAD kinase (267 aa).

Asp-45 (proton acceptor) is an active-site residue. NAD(+)-binding positions include 45–46 (DG), 122–123 (NE), Arg-148, Asp-150, 161–166 (TAYNKS), Ala-185, and Gln-223.

It belongs to the NAD kinase family. A divalent metal cation is required as a cofactor.

It is found in the cytoplasm. It catalyses the reaction NAD(+) + ATP = ADP + NADP(+) + H(+). Its function is as follows. Involved in the regulation of the intracellular balance of NAD and NADP, and is a key enzyme in the biosynthesis of NADP. Catalyzes specifically the phosphorylation on 2'-hydroxyl of the adenosine moiety of NAD to yield NADP. The sequence is that of NAD kinase from Levilactobacillus brevis (strain ATCC 367 / BCRC 12310 / CIP 105137 / JCM 1170 / LMG 11437 / NCIMB 947 / NCTC 947) (Lactobacillus brevis).